Here is a 293-residue protein sequence, read N- to C-terminus: Pyridoxal 5'-phosphate synthase subunit PdxS (293 aa).

Aspartate 23 lines the D-ribose 5-phosphate pocket. The active-site Schiff-base intermediate with D-ribose 5-phosphate is the lysine 80. Position 152 (glycine 152) interacts with D-ribose 5-phosphate. Arginine 164 is a D-glyceraldehyde 3-phosphate binding site. Residues glycine 213 and 234 to 235 (GS) each bind D-ribose 5-phosphate.

It belongs to the PdxS/SNZ family. In the presence of PdxT, forms a dodecamer of heterodimers.

The catalysed reaction is aldehydo-D-ribose 5-phosphate + D-glyceraldehyde 3-phosphate + L-glutamine = pyridoxal 5'-phosphate + L-glutamate + phosphate + 3 H2O + H(+). Its pathway is cofactor biosynthesis; pyridoxal 5'-phosphate biosynthesis. In terms of biological role, catalyzes the formation of pyridoxal 5'-phosphate from ribose 5-phosphate (RBP), glyceraldehyde 3-phosphate (G3P) and ammonia. The ammonia is provided by the PdxT subunit. Can also use ribulose 5-phosphate and dihydroxyacetone phosphate as substrates, resulting from enzyme-catalyzed isomerization of RBP and G3P, respectively. The protein is Pyridoxal 5'-phosphate synthase subunit PdxS of Methanothermobacter thermautotrophicus (strain ATCC 29096 / DSM 1053 / JCM 10044 / NBRC 100330 / Delta H) (Methanobacterium thermoautotrophicum).